We begin with the raw amino-acid sequence, 1123 residues long: Leucine--tRNA ligase, cytoplasmic (1123 aa).

The 'HIGH' region motif lies at 84-94; that stretch reads PYMNGRLHAGH. Residues 757–761 carry the 'KMSKS' region motif; the sequence is KMSKS. K760 lines the ATP pocket.

Belongs to the class-I aminoacyl-tRNA synthetase family.

The protein resides in the cytoplasm. It catalyses the reaction tRNA(Leu) + L-leucine + ATP = L-leucyl-tRNA(Leu) + AMP + diphosphate. In Neurospora crassa (strain ATCC 24698 / 74-OR23-1A / CBS 708.71 / DSM 1257 / FGSC 987), this protein is Leucine--tRNA ligase, cytoplasmic (leu-6).